The primary structure comprises 234 residues: Fibrillarin-like rRNA/tRNA 2'-O-methyltransferase (234 aa).

S-adenosyl-L-methionine is bound by residues 90 to 91, 109 to 110, 134 to 135, and 154 to 157; these read TT, EF, DA, and DIAQ.

This sequence belongs to the methyltransferase superfamily. Fibrillarin family. As to quaternary structure, interacts with nop5. Component of box C/D small ribonucleoprotein (sRNP) particles that contain rpl7ae, FlpA and nop5, plus a guide RNA.

Involved in pre-rRNA and tRNA processing. Utilizes the methyl donor S-adenosyl-L-methionine to catalyze the site-specific 2'-hydroxyl methylation of ribose moieties in rRNA and tRNA. Site specificity is provided by a guide RNA that base pairs with the substrate. Methylation occurs at a characteristic distance from the sequence involved in base pairing with the guide RNA. In Staphylothermus marinus (strain ATCC 43588 / DSM 3639 / JCM 9404 / F1), this protein is Fibrillarin-like rRNA/tRNA 2'-O-methyltransferase.